The following is a 64-amino-acid chain: Conotoxin Cal6.26 (64 aa).

An N-terminal signal peptide occupies residues 1–22; sequence MKLTCVMIVAVLVLTVCKVVTS. Cystine bridges form between cysteine 32-cysteine 50, cysteine 40-cysteine 54, and cysteine 49-cysteine 60.

Expressed by the venom duct.

The protein localises to the secreted. Functionally, probable neurotoxin. The chain is Conotoxin Cal6.26 from Californiconus californicus (California cone).